We begin with the raw amino-acid sequence, 390 residues long: Cystathionine beta-lyase (390 aa).

Lys202 carries the post-translational modification N6-(pyridoxal phosphate)lysine.

This sequence belongs to the trans-sulfuration enzymes family. The cofactor is pyridoxal 5'-phosphate.

It is found in the cytoplasm. The protein localises to the nucleus. The enzyme catalyses L,L-cystathionine + H2O = L-homocysteine + pyruvate + NH4(+). It carries out the reaction an S-substituted L-cysteine + H2O = a thiol + pyruvate + NH4(+). Its pathway is amino-acid biosynthesis; L-methionine biosynthesis via de novo pathway; L-homocysteine from L-cystathionine: step 1/1. This chain is Cystathionine beta-lyase (str3), found in Schizosaccharomyces pombe (strain 972 / ATCC 24843) (Fission yeast).